We begin with the raw amino-acid sequence, 550 residues long: Glucose-6-phosphate isomerase 2 (550 aa).

Glutamate 357 functions as the Proton donor in the catalytic mechanism. Residues histidine 388 and lysine 514 contribute to the active site. The segment at 527-550 is disordered; it reads DTGALGHDSSTNGLIRHYRERHGK.

The protein belongs to the GPI family.

The protein resides in the cytoplasm. The catalysed reaction is alpha-D-glucose 6-phosphate = beta-D-fructose 6-phosphate. It participates in carbohydrate biosynthesis; gluconeogenesis. The protein operates within carbohydrate degradation; glycolysis; D-glyceraldehyde 3-phosphate and glycerone phosphate from D-glucose: step 2/4. Catalyzes the reversible isomerization of glucose-6-phosphate to fructose-6-phosphate. This Chromobacterium violaceum (strain ATCC 12472 / DSM 30191 / JCM 1249 / CCUG 213 / NBRC 12614 / NCIMB 9131 / NCTC 9757 / MK) protein is Glucose-6-phosphate isomerase 2.